Consider the following 147-residue polypeptide: Large ribosomal subunit protein uL11 (147 aa).

It belongs to the universal ribosomal protein uL11 family. As to quaternary structure, part of the ribosomal stalk of the 50S ribosomal subunit. Interacts with L10 and the large rRNA to form the base of the stalk. L10 forms an elongated spine to which L12 dimers bind in a sequential fashion forming a multimeric L10(L12)X complex. One or more lysine residues are methylated.

Its function is as follows. Forms part of the ribosomal stalk which helps the ribosome interact with GTP-bound translation factors. This chain is Large ribosomal subunit protein uL11, found in Cytophaga hutchinsonii (strain ATCC 33406 / DSM 1761 / CIP 103989 / NBRC 15051 / NCIMB 9469 / D465).